A 20-amino-acid polypeptide reads, in one-letter code: Pregnancy-associated glycoprotein 60H (20 aa).

A glycan (N-linked (GlcNAc...) asparagine) is linked at Asn4.

It belongs to the peptidase A1 family. As to expression, chorionic epithelium (trophectoderm) and placental cotyledons.

It localises to the secreted. Its subcellular location is the extracellular space. In Bison bonasus (European bison), this protein is Pregnancy-associated glycoprotein 60H.